A 493-amino-acid polypeptide reads, in one-letter code: Transcript termination protein OPG145 (493 aa).

The Helicase ATP-binding domain maps to 100 to 256 (MIKLKRPLYI…NSIINIAKLS (157 aa)). ATP is bound at residue 113 to 120 (LACGFGKT). The short motif at 206–209 (DESH) is the DESH box element.

It belongs to the helicase family. Poxviruses subfamily. In terms of assembly, interacts with OPG087. Might be part of a transcription complex composed at least of OPG087, OPG110, and OPG145.

The protein localises to the virion. DNA helicase which seems to act as a postreplicative transcription termination factor. Involved in ATP-dependent release of nascent RNA. Forms a stable complex with single-stranded DNA, and to a lesser extent RNA. The sequence is that of Transcript termination protein OPG145 (OPG145) from Variola virus (isolate Human/India/Ind3/1967) (VARV).